Consider the following 464-residue polypeptide: Protein FAM90A23 (464 aa).

3 disordered regions span residues 1–42 (MMAR…DPRL), 69–389 (VPAT…HDGA), and 415–437 (HSPE…SEAP). 2 stretches are compositionally biased toward basic and acidic residues: residues 74-89 (GKKE…KPRA) and 97-114 (NKDK…DPQR). Residues 180 to 197 (LASLSPLRKASLSSSSSL) are compositionally biased toward low complexity.

This sequence belongs to the FAM90 family.

This Homo sapiens (Human) protein is Protein FAM90A23.